Reading from the N-terminus, the 195-residue chain is AEQLVIDYSEKSVIVQKEKLIAKNTDENLKLIFTDGVQQKEINQFISKSQAFVAGLMHDIGGVYPNHQRVEKAELFGIELLTEEREFPLIIHQKLSKYLAREHFKITDENILSAIECHTTLKENFTELDLIVFLADKISWDGGDNAPFKEGLLTALSVNLQSAALYYIDFIINDGLKVAHPWLLEAKKDLENQLS.

In terms of domain architecture, HD spans 24 to 141 (NTDENLKLIF…VFLADKISWD (118 aa)).

This is an uncharacterized protein from Lactococcus lactis subsp. cremoris (Streptococcus cremoris).